The sequence spans 162 residues: uncharacterized protein (162 aa).

Belongs to the M.jannaschii MJ0150/MJ0739/MJ0745/MJ1460/MJ1642 family.

This is an uncharacterized protein from Methanocaldococcus jannaschii (strain ATCC 43067 / DSM 2661 / JAL-1 / JCM 10045 / NBRC 100440) (Methanococcus jannaschii).